The sequence spans 77 residues: Large ribosomal subunit protein bL28 (77 aa).

It belongs to the bacterial ribosomal protein bL28 family.

This Karelsulcia muelleri (strain GWSS) (Sulcia muelleri) protein is Large ribosomal subunit protein bL28.